Here is a 571-residue protein sequence, read N- to C-terminus: ATP-dependent RNA helicase RhlB (571 aa).

Residues 9-37 carry the Q motif motif; sequence VTFSSFDLHPALIAGLESAGFTRCTPIQA. A Helicase ATP-binding domain is found at 40–220; the sequence is LPVALPGGDV…YEHMNEPEKL (181 aa). 53 to 60 serves as a coordination point for ATP; the sequence is AQTGTGKT. The DEAD box signature appears at 166–169; sequence DEAD. The 163-residue stretch at 231-393 folds into the Helicase C-terminal domain; it reads RVRQRIYFPS…PVTSELLTPL (163 aa). The segment at 391 to 558 is disordered; the sequence is TPLPRAPRVP…KPSGSPSLLS (168 aa). Residues 402-411 are compositionally biased toward acidic residues; that stretch reads EGEEADDDAG. Residues 419-432 are compositionally biased toward basic and acidic residues; sequence REAREQRAAEEQRR. Over residues 435-448 the composition is skewed to gly residues; the sequence is GRGGPGGSRSGSGG. The span at 449 to 460 shows a compositional bias: basic and acidic residues; the sequence is GRRDGAGADGKP. A compositionally biased stretch (low complexity) spans 483–497; that stretch reads VVAAVAAQAPSAGVA. Over residues 503–512 the composition is skewed to basic residues; it reads PRKRRRRRNG. The span at 539-558 shows a compositional bias: low complexity; sequence VVAKPVRAAAKPSGSPSLLS.

Belongs to the DEAD box helicase family. RhlB subfamily. As to quaternary structure, component of the RNA degradosome, which is a multiprotein complex involved in RNA processing and mRNA degradation.

Its subcellular location is the cytoplasm. The catalysed reaction is ATP + H2O = ADP + phosphate + H(+). In terms of biological role, DEAD-box RNA helicase involved in RNA degradation. Has RNA-dependent ATPase activity and unwinds double-stranded RNA. This chain is ATP-dependent RNA helicase RhlB, found in Xanthomonas axonopodis pv. citri (strain 306).